Reading from the N-terminus, the 505-residue chain is Lysine--tRNA ligase (505 aa).

Glu415 and Glu422 together coordinate Mg(2+).

It belongs to the class-II aminoacyl-tRNA synthetase family. Homodimer. Mg(2+) serves as cofactor.

It is found in the cytoplasm. The enzyme catalyses tRNA(Lys) + L-lysine + ATP = L-lysyl-tRNA(Lys) + AMP + diphosphate. The polypeptide is Lysine--tRNA ligase (Shigella flexneri).